The following is a 61-amino-acid chain: Small ribosomal subunit protein uS14 (61 aa).

4 residues coordinate Zn(2+): Cys-24, Cys-27, Cys-40, and Cys-43.

Belongs to the universal ribosomal protein uS14 family. Zinc-binding uS14 subfamily. In terms of assembly, part of the 30S ribosomal subunit. Contacts proteins S3 and S10. Zn(2+) serves as cofactor.

In terms of biological role, binds 16S rRNA, required for the assembly of 30S particles and may also be responsible for determining the conformation of the 16S rRNA at the A site. The protein is Small ribosomal subunit protein uS14 of Limosilactobacillus fermentum (strain NBRC 3956 / LMG 18251) (Lactobacillus fermentum).